A 549-amino-acid chain; its full sequence is Glucose-6-phosphate isomerase (549 aa).

Glu-355 serves as the catalytic Proton donor. Active-site residues include His-386 and Lys-514.

It belongs to the GPI family.

The protein localises to the cytoplasm. The catalysed reaction is alpha-D-glucose 6-phosphate = beta-D-fructose 6-phosphate. Its pathway is carbohydrate biosynthesis; gluconeogenesis. The protein operates within carbohydrate degradation; glycolysis; D-glyceraldehyde 3-phosphate and glycerone phosphate from D-glucose: step 2/4. Catalyzes the reversible isomerization of glucose-6-phosphate to fructose-6-phosphate. This Buchnera aphidicola subsp. Acyrthosiphon pisum (strain APS) (Acyrthosiphon pisum symbiotic bacterium) protein is Glucose-6-phosphate isomerase.